The primary structure comprises 141 residues: Heavy metal-associated isoprenylated plant protein 29 (141 aa).

The region spanning 1–59 (MEVPMDCPGCENKVRKALEKMNGVHDVQIDIKQQRVTVTGSAEQKKVLKVARNVTKRDI) is the HMA domain. Residues C7 and C10 each coordinate a metal cation. C138 bears the Cysteine methyl ester mark. C138 carries the S-farnesyl cysteine lipid modification. Positions 139–141 (SIM) are cleaved as a propeptide — removed in mature form.

It belongs to the HIPP family.

Functionally, heavy-metal-binding protein. The sequence is that of Heavy metal-associated isoprenylated plant protein 29 from Arabidopsis thaliana (Mouse-ear cress).